Reading from the N-terminus, the 525-residue chain is Histidine-rich glycoprotein (525 aa).

Positions 1–18 (MKALIAALLLITLQYSCA) are cleaved as a signal peptide. 2 Cystatin domains span residues 19-136 (VSPT…SALA) and 137-254 (NTKD…NING). Intrachain disulfides connect Cys-24-Cys-504, Cys-78-Cys-89, Cys-105-Cys-126, Cys-203-Cys-417, and Cys-218-Cys-241. An interaction with ATP5F1A region spans residues 41-84 (RRRDGYLFQLLRIADAHLDRVENTTVYYLVLDVQESDCSVLSRK). A glycan (N-linked (GlcNAc...) asparagine) is linked at Asn-63. N-linked (GlcNAc...) asparagine glycosylation is present at Asn-125. Positions 252–407 (INGVPPHLGH…GHHPHGHHPH (156 aa)) are disordered. Basic residues predominate over residues 284-293 (RDHHHPHKPH). A compositionally biased stretch (pro residues) spans 310–320 (PPLPQGPPPLL). Positions 323–348 (SCSSCQHATFGTNGAQRHSHNNNSSD) are enriched in polar residues. N-linked (GlcNAc...) asparagine glycans are attached at residues Asn-344 and Asn-345. Positions 348–382 (DLHPHKHHSHEQHPHGHHPHAHHPHEHDTHRQHPH) are necessary for endothelial cell focal adhesions and anti-angiogenic activities. 2 stretches are compositionally biased toward basic residues: residues 351-371 (PHKH…AHHP) and 379-407 (QHPH…HHPH).

Interacts (via the HRR domain) with TPM1; the interaction appears to contribute to the antiangiogenic properties of the HRR domain. Interacts with THBS2; the interaction blocks the antiangiogenic effect of THBS2 with CD36. Interacts with THBS1 (via the TSP type I repeats); the interaction blocks the antiangiogenic effect of THBS1 with CD3. Interacts with PLG (via its Kringle domains); the interaction tethers PLG to the cell surface and enhances its activation. Interacts with HPSE; the interaction is enhanced at acidic pH, partially inhibits binding of HPSE to cell surface receptors and modulates its enzymatic activity. Interacts (via the HRR domain) with TMP1; the interaction partially mediates the antiangiogenic properties of HRG. Interacts with kappa and lambda light chains of IgG molecules. Interacts with ATP5F1A; the interaction occurs on the surface of T-cells and alters their cell morphology in concert with CONA. Binds IgG molecules containing kappa and lambda light chains and inhibits the formation of insoluble immunoglobulin complexes. Interacts with F12; the interaction, which is enhanced in the presence of zinc ions and inhibited by heparin-binding to HRG, inhibits factor XII autoactivation and contact-initiated coagulation. The cofactor is Zn(2+). Proteolytic cleavage produces several HRG fragments which are mostly disulfide-linked and, therefore, not released. Cleavage by plasmin is inhibited in the presence of heparin, zinc ions or in an acidic environment. Cleavage reduces binding of HRG to heparan sulfate, but enhances the ability of HRG to bind and tether plasminogen to the cell surface. On platelet activation, releases a 33 kDa antiangiogenic peptide which encompasses the HRR. Also cleaved in the C-terminal by plasmin. Post-translationally, N-glycosylated. Expressed in macrophages and in malignant cells. Expressed by the liver and secreted in plasma (at protein level).

It is found in the secreted. Plasma glycoprotein that binds a number of ligands such as heme, heparin, heparan sulfate, thrombospondin, plasminogen, and divalent metal ions. Binds heparin and heparin/glycosaminoglycans in a zinc-dependent manner. Binds heparan sulfate on the surface of liver, lung, kidney and heart endothelial cells. Binds to N-sulfated polysaccharide chains on the surface of liver endothelial cells. Inhibits rosette formation. Acts as an adapter protein and is implicated in regulating many processes such as immune complex and pathogen clearance, cell chemotaxis, cell adhesion, angiogenesis, coagulation and fibrinolysis. Mediates clearance of necrotic cells through enhancing the phagocytosis of necrotic cells in a heparan sulfate-dependent pathway. This process can be regulated by the presence of certain HRG ligands such as heparin and zinc ions. Binds to IgG subclasses of immunoglobins containing kappa and lambda light chains with different affinities regulating their clearance and inhibiting the formation of insoluble immune complexes. Tethers plasminogen to the cell surface. Binds T-cells and alters the cell morphology. Modulates angiogenesis by blocking the CD6-mediated antiangiongenic effect of thrombospondins, THBS1 and THBS2. Acts as a regulator of the vascular endothelial growth factor (VEGF) signaling pathway; inhibits endothelial cell motility by reducing VEGF-induced complex formation between PXN/paxillin and ILK/integrin-linked protein kinase and by promoting inhibition of VEGF-induced tyrosine phosphorylation of focal adhesion kinases and alpha-actinins in endothelial cells. Also plays a role in the regulation of tumor angiogenesis and tumor immune surveillance. Normalizes tumor vessels and promotes antitumor immunity by polarizing tumor-associated macrophages, leading to decreased tumor growth and metastasis. This chain is Histidine-rich glycoprotein (HRG), found in Homo sapiens (Human).